A 515-amino-acid polypeptide reads, in one-letter code: Bifunctional purine biosynthesis protein PurH (515 aa).

Positions 1–145 (MTKRALISVS…KNHASVTVVV (145 aa)) constitute an MGS-like domain.

It belongs to the PurH family.

It catalyses the reaction (6R)-10-formyltetrahydrofolate + 5-amino-1-(5-phospho-beta-D-ribosyl)imidazole-4-carboxamide = 5-formamido-1-(5-phospho-D-ribosyl)imidazole-4-carboxamide + (6S)-5,6,7,8-tetrahydrofolate. The enzyme catalyses IMP + H2O = 5-formamido-1-(5-phospho-D-ribosyl)imidazole-4-carboxamide. It participates in purine metabolism; IMP biosynthesis via de novo pathway; 5-formamido-1-(5-phospho-D-ribosyl)imidazole-4-carboxamide from 5-amino-1-(5-phospho-D-ribosyl)imidazole-4-carboxamide (10-formyl THF route): step 1/1. Its pathway is purine metabolism; IMP biosynthesis via de novo pathway; IMP from 5-formamido-1-(5-phospho-D-ribosyl)imidazole-4-carboxamide: step 1/1. This chain is Bifunctional purine biosynthesis protein PurH, found in Streptococcus pyogenes serotype M3 (strain ATCC BAA-595 / MGAS315).